Reading from the N-terminus, the 297-residue chain is Mitochondrial glycine transporter (297 aa).

3 Solcar repeats span residues 5-81, 105-189, and 211-295; these read TGHL…MRTA, LSMY…LKHT, and TSTA…LIKH. Helical transmembrane passes span 8-33, 56-82, 111-136, 164-187, 215-241, and 270-288; these read LIGG…TRFQ, GTLP…RTAL, LVTG…VRYE, GFGP…EKLK, INST…KTRM, and GLSM…AWGI.

It belongs to the mitochondrial carrier (TC 2.A.29) family. SLC25A38 subfamily.

The protein localises to the mitochondrion inner membrane. The enzyme catalyses glycine(in) = glycine(out). Functionally, mitochondrial glycine transporter that imports glycine into the mitochondrial matrix. Plays an important role in providing glycine for the first enzymatic step in heme biosynthesis, the condensation of glycine with succinyl-CoA to produce 5-aminolevulinate (ALA) in the mitochondrial matrix. This chain is Mitochondrial glycine transporter, found in Candida glabrata (strain ATCC 2001 / BCRC 20586 / JCM 3761 / NBRC 0622 / NRRL Y-65 / CBS 138) (Yeast).